The sequence spans 325 residues: Beta-ketoacyl-[acyl-carrier-protein] synthase III (325 aa).

Residues Cys-116 and His-252 contribute to the active site. Residues 253–257 are ACP-binding; that stretch reads QANLR. Asn-282 is an active-site residue.

It belongs to the thiolase-like superfamily. FabH family. As to quaternary structure, homodimer.

The protein localises to the cytoplasm. It carries out the reaction malonyl-[ACP] + acetyl-CoA + H(+) = 3-oxobutanoyl-[ACP] + CO2 + CoA. The protein operates within lipid metabolism; fatty acid biosynthesis. Its function is as follows. Catalyzes the condensation reaction of fatty acid synthesis by the addition to an acyl acceptor of two carbons from malonyl-ACP. Catalyzes the first condensation reaction which initiates fatty acid synthesis and may therefore play a role in governing the total rate of fatty acid production. Possesses both acetoacetyl-ACP synthase and acetyl transacylase activities. Its substrate specificity determines the biosynthesis of branched-chain and/or straight-chain of fatty acids. The polypeptide is Beta-ketoacyl-[acyl-carrier-protein] synthase III (Xanthomonas euvesicatoria pv. vesicatoria (strain 85-10) (Xanthomonas campestris pv. vesicatoria)).